The chain runs to 88 residues: Protein A19 homolog (88 aa).

The disordered stretch occupies residues 1-28 (MADSTAGAKKRKKRSTSATSTRKEPPTV).

Belongs to the chordopoxvirinae A19 family.

The protein is Protein A19 homolog of Fowlpox virus (strain NVSL) (FPV).